Reading from the N-terminus, the 343-residue chain is Aspartate beta-hydroxylase domain-containing protein 2 (343 aa).

At 1–31 (MWLEWLVAWSWSLDGLRDCIATGIQSVRDCD) the chain is on the cytoplasmic side. A helical membrane pass occupies residues 32–52 (GTAVITVACLLILFVWYCYHV). The Lumenal portion of the chain corresponds to 53–343 (GREQPRPHVS…ALDFIFAPGR (291 aa)). Asn77 and Asn185 each carry an N-linked (GlcNAc...) asparagine glycan. 2-oxoglutarate is bound by residues Trp202 and Ser246. Fe cation is bound at residue His257. Residue 266-268 (RCH) coordinates 2-oxoglutarate. His302 contributes to the Fe cation binding site. Arg315 contributes to the 2-oxoglutarate binding site.

The protein belongs to the aspartyl/asparaginyl beta-hydroxylase family. Fe cation serves as cofactor.

Its subcellular location is the membrane. Functionally, may function as 2-oxoglutarate-dependent dioxygenase. This is Aspartate beta-hydroxylase domain-containing protein 2 (Asphd2) from Mus musculus (Mouse).